The sequence spans 573 residues: CTP synthase (573 aa).

An amidoligase domain region spans residues M1 to L281. S23 provides a ligand contact to CTP. A UTP-binding site is contributed by S23. ATP-binding positions include S24 to L29 and D81. Positions 81 and 155 each coordinate Mg(2+). Residues D162–E164, K202–Q207, and K238 each bind CTP. UTP is bound by residues K202–Q207 and K238. Positions E306 to A554 constitute a Glutamine amidotransferase type-1 domain. G369 lines the L-glutamine pocket. The active-site Nucleophile; for glutamine hydrolysis is the C396. L-glutamine contacts are provided by residues L397–Q400, E419, and R480. Residues H527 and E529 contribute to the active site.

This sequence belongs to the CTP synthase family. Homotetramer.

The enzyme catalyses UTP + L-glutamine + ATP + H2O = CTP + L-glutamate + ADP + phosphate + 2 H(+). It catalyses the reaction L-glutamine + H2O = L-glutamate + NH4(+). The catalysed reaction is UTP + NH4(+) + ATP = CTP + ADP + phosphate + 2 H(+). Its pathway is pyrimidine metabolism; CTP biosynthesis via de novo pathway; CTP from UDP: step 2/2. Its activity is regulated as follows. Allosterically activated by GTP, when glutamine is the substrate; GTP has no effect on the reaction when ammonia is the substrate. The allosteric effector GTP functions by stabilizing the protein conformation that binds the tetrahedral intermediate(s) formed during glutamine hydrolysis. Inhibited by the product CTP, via allosteric rather than competitive inhibition. In terms of biological role, catalyzes the ATP-dependent amination of UTP to CTP with either L-glutamine or ammonia as the source of nitrogen. Regulates intracellular CTP levels through interactions with the four ribonucleotide triphosphates. The chain is CTP synthase from Nocardia farcinica (strain IFM 10152).